A 92-amino-acid chain; its full sequence is Protein OP-ORF (92 aa).

Residues 53–82 adopt a coiled-coil conformation; it reads KMLAATISILEEEVTELVTELNNTTNLTAK.

This is Protein OP-ORF from Rice dwarf virus (isolate Fujian) (RDV).